The chain runs to 228 residues: Cytochrome c biogenesis ATP-binding export protein CcmA (228 aa).

The ABC transporter domain maps to 2–227 (LSIERLGVGR…LHLERSGAWL (226 aa)). Residue 34-41 (GANGSGKT) coordinates ATP. The interval 106 to 126 (GAPDGTSSVPASGRSGVAAPP) is disordered.

Belongs to the ABC transporter superfamily. CcmA exporter (TC 3.A.1.107) family. In terms of assembly, the complex is composed of two ATP-binding proteins (CcmA) and two transmembrane proteins (CcmB).

It localises to the cell inner membrane. The catalysed reaction is heme b(in) + ATP + H2O = heme b(out) + ADP + phosphate + H(+). In terms of biological role, part of the ABC transporter complex CcmAB involved in the biogenesis of c-type cytochromes; once thought to export heme, this seems not to be the case, but its exact role is uncertain. Responsible for energy coupling to the transport system. In Paraburkholderia xenovorans (strain LB400), this protein is Cytochrome c biogenesis ATP-binding export protein CcmA.